Consider the following 397-residue polypeptide: Succinate--CoA ligase [ADP-forming] subunit beta (397 aa).

The 246-residue stretch at 9-254 folds into the ATP-grasp domain; that stretch reads KALLREFGVP…ESEEDAKEIE (246 aa). Residues lysine 46, 53-55, glutamate 109, serine 112, and glutamate 117 each bind ATP; that span reads GRG. Residues asparagine 209 and aspartate 223 each contribute to the Mg(2+) site. Substrate-binding positions include asparagine 274 and 331 to 333; that span reads GIM.

The protein belongs to the succinate/malate CoA ligase beta subunit family. Heterotetramer of two alpha and two beta subunits. Requires Mg(2+) as cofactor.

It carries out the reaction succinate + ATP + CoA = succinyl-CoA + ADP + phosphate. The catalysed reaction is GTP + succinate + CoA = succinyl-CoA + GDP + phosphate. It functions in the pathway carbohydrate metabolism; tricarboxylic acid cycle; succinate from succinyl-CoA (ligase route): step 1/1. In terms of biological role, succinyl-CoA synthetase functions in the citric acid cycle (TCA), coupling the hydrolysis of succinyl-CoA to the synthesis of either ATP or GTP and thus represents the only step of substrate-level phosphorylation in the TCA. The beta subunit provides nucleotide specificity of the enzyme and binds the substrate succinate, while the binding sites for coenzyme A and phosphate are found in the alpha subunit. The protein is Succinate--CoA ligase [ADP-forming] subunit beta of Nitrobacter hamburgensis (strain DSM 10229 / NCIMB 13809 / X14).